Here is a 349-residue protein sequence, read N- to C-terminus: GDP-mannose:glycolipid 4-beta-D-mannosyltransferase (349 aa).

Residues 1–14 (MSASASLPVTRAAA) form the signal peptide.

This sequence belongs to the glycosyltransferase 94 family.

It localises to the cell inner membrane. The enzyme catalyses beta-D-GlcA-(1-&gt;2)-alpha-D-Man-(1-&gt;3)-beta-D-Glc-(1-&gt;4)-alpha-D-Glc-di-trans,octa-cis-undecaprenyl diphosphate + GDP-alpha-D-mannose = beta-D-Man-(1-&gt;4)-beta-D-GlcA-(1-&gt;2)-alpha-D-Man-(1-&gt;3)-beta-D-Glc-(1-&gt;4)-alpha-D-Glc-di-trans,octa-cis-undecaprenyl diphosphate + GDP + H(+). The protein operates within glycan biosynthesis; xanthan biosynthesis. In terms of biological role, nonprocessive beta-mannosyltransferase that catalyzes the transfer of a mannose residue from GDP-mannose to glucuronic acid-beta-1,2-mannose-alpha-1,3-glucose-beta-1,4-glucose-PP-polyisoprenyl to form the lipid-linked pentasaccharide repeating unit of xanthan, Man-GlcA-Man-Glc(2)-PP-Pol. Is involved in the biosynthesis of the exopolysaccharide xanthan. To a lesser extent, can also use ADP-Man and even GDP-Glc as sugar donor substrates in vitro. Is unable to transfer a Man residue to the free-tetrasaccharide GlcA-Man-Glc(2) used as an acceptor, which indicates that the diphosphate group and the lipid moiety in the acceptor substrate are of major importance for acceptor binding and catalysis. The polypeptide is GDP-mannose:glycolipid 4-beta-D-mannosyltransferase (gumI) (Xanthomonas campestris pv. campestris).